The chain runs to 214 residues: Insulin-like growth factor 2 (214 aa).

The interval 48 to 79 is b; the sequence is EVASAETLCGGELVDALQFVCEDRGFYFSRPT. Disulfide bonds link Cys56–Cys97, Cys68–Cys110, and Cys96–Cys101. Residues 80–90 are c; that stretch reads SRSNSRRSQNR. An a region spans residues 91 to 111; it reads GIVEECCFRSCDLNLLEQYCA. A d region spans residues 112-117; it reads KPAKSE. Positions 118–214 are cleaved as a propeptide — e peptide; that stretch reads RDVSATSLQI…PPTDNYVSHN (97 aa).

This sequence belongs to the insulin family.

Its subcellular location is the secreted. Functionally, the insulin-like growth factors, isolated from plasma, are structurally and functionally related to insulin but have a much higher growth-promoting activity. Acts as a ligand for integrin which is required for IGF2 signaling. The protein is Insulin-like growth factor 2 of Oncorhynchus mykiss (Rainbow trout).